The sequence spans 612 residues: MSNSHPLRPFTAVGEIDHVHILSEHIGALLIGEEYGDVTFVVEKKRFPAHRVILAARCQYFRALLYGGMRESQPEAEIPLQDTTAEAFTMLLKYIYTGRATLTDEKEEVLLDFLSLAHKYGFPELEDSTSEYLCTILNIQNVCMTFDVASLYSLPKLTCMCCMFMDRNAQEVLSSEGFLSLSKTALLNIVLRDSFAAPEKDIFLALLNWCKHNSKENHAEIMQAVRLPLMSLTELLNVVRPSGLLSPDAILDAIKVRSESRDMDLNYRGMLIPEENIATMKYGAQVVKGELKSALLDGDTQNYDLDHGFSRHPIDDDCRSGIEIKLGQPSIINHIRILLWDRDSRSYSYFIEVSMDELDWVRVIDHSQYLCRSWQKLYFPARVCRYIRIVGTHNTVNKIFHIVAFECMFTNKTFTLEKGLIVPMENVATIADCASVIEGVSRSRNALLNGDTKNYDWDSGYTCHQLGSGAIVVQLAQPYMIGSIRLLLWDCDDRSYSYYVEVSTNQQQWTMVADRTKVSCKSWQSVTFERQPASFIRIVGTHNTANEVFHCVHFECPEQQSSQKEENSEESGTGDTSLAGQQLDSHALRAPSGSSLPSSPGSNSRSPNRQHQ.

The 69-residue stretch at 36-104 (GDVTFVVEKK…IYTGRATLTD (69 aa)) folds into the BTB domain. In terms of domain architecture, BACK spans 142 to 240 (VCMTFDVASL…SLTELLNVVR (99 aa)). The segment at 560–612 (QSSQKEENSEESGTGDTSLAGQQLDSHALRAPSGSSLPSSPGSNSRSPNRQHQ) is disordered. Positions 573-584 (TGDTSLAGQQLD) are enriched in polar residues. A compositionally biased stretch (low complexity) spans 588–612 (LRAPSGSSLPSSPGSNSRSPNRQHQ).

In terms of tissue distribution, detected in the brain (at protein level). Moderately expressed in all specific brain regions examined. Expressed in the dopaminergic neurons of the substantia nigra and A11 neurons. Highly expressed in kidney and moderately expressed in all other adult and fetal tissues.

This chain is BTB/POZ domain-containing protein 9 (BTBD9), found in Homo sapiens (Human).